The following is a 139-amino-acid chain: Acidic phospholipase A2 5 (139 aa).

The first 16 residues, 1 to 16, serve as a signal peptide directing secretion; it reads MRTLWIVAVWLMGVEG. Disulfide bonds link C42–C131, C44–C60, C59–C111, C65–C139, C66–C104, C73–C97, and C91–C102. Ca(2+) contacts are provided by Y43, G45, and G47. The active site involves H63. D64 contacts Ca(2+). The active site involves D105.

Belongs to the phospholipase A2 family. Group II subfamily. D49 sub-subfamily. It depends on Ca(2+) as a cofactor. Expressed by the venom gland.

It localises to the secreted. The catalysed reaction is a 1,2-diacyl-sn-glycero-3-phosphocholine + H2O = a 1-acyl-sn-glycero-3-phosphocholine + a fatty acid + H(+). In terms of biological role, PLA2 catalyzes the calcium-dependent hydrolysis of the 2-acyl groups in 3-sn-phosphoglycerides. This Echis pyramidum leakeyi (Leakey's carpet viper) protein is Acidic phospholipase A2 5.